Here is an 82-residue protein sequence, read N- to C-terminus: Three-finger toxin MALT0063C (82 aa).

An N-terminal signal peptide occupies residues 1 to 21; the sequence is MRTLLLTLVVVTIVCLDLGNS. Cystine bridges form between Cys24/Cys42, Cys35/Cys60, Cys64/Cys72, and Cys73/Cys78.

This sequence belongs to the three-finger toxin family. Short-chain subfamily. In terms of tissue distribution, expressed by the venom gland.

The protein resides in the secreted. This chain is Three-finger toxin MALT0063C, found in Micrurus altirostris (Uruguayan coral snake).